The following is a 1199-amino-acid chain: DNA-directed RNA polymerase subunit beta (1199 aa).

The tract at residues Glu1175 to Lys1199 is disordered. Residues Asp1188–Lys1199 are compositionally biased toward polar residues.

Belongs to the RNA polymerase beta chain family. The RNAP catalytic core consists of 2 alpha, 1 beta, 1 beta' and 1 omega subunit. When a sigma factor is associated with the core the holoenzyme is formed, which can initiate transcription.

The catalysed reaction is RNA(n) + a ribonucleoside 5'-triphosphate = RNA(n+1) + diphosphate. Its function is as follows. DNA-dependent RNA polymerase catalyzes the transcription of DNA into RNA using the four ribonucleoside triphosphates as substrates. The protein is DNA-directed RNA polymerase subunit beta of Lacticaseibacillus casei (strain BL23) (Lactobacillus casei).